The following is a 396-amino-acid chain: MAKAKFERNKPHCNIGTIGHVDHGKTSLTAAITKILAETGGATFTAYDQIDKAPEEKARGITISTAHVEYETSNRHYAHVDCPGHADYVKNMITGAAQMDGAILVVSAADGPMPQTREHILLARQVGVPALVVFMNKCDMVDDPELLDLVELEVRELLSSYDFPGDDIPIVRGSALCALEDKQPEIGRDAILKLMAEVDAYIPQPERPKDKPFLMPIEDVFSISGRGTVVTGRVERGVVKVGEEVEIVGIKNTVKTTCTGVEMFRKLLDQGEAGDNIGALLRGTKREDVERGQVLAAPGSITPHTDFEAEAYILNKEEGGRHTPFFTNYRPQFYFRTTDVTGVVALPEGTEMVMPGDNVKMIVTLIAPIAMDQGLRFAIREGGRTVGAGVVAKIIK.

The 197-residue stretch at 10–206 folds into the tr-type G domain; it reads KPHCNIGTIG…EVDAYIPQPE (197 aa). The interval 19–26 is G1; the sequence is GHVDHGKT. 19–26 serves as a coordination point for GTP; sequence GHVDHGKT. Thr-26 contributes to the Mg(2+) binding site. Positions 60–64 are G2; sequence GITIS. Residues 81–84 form a G3 region; that stretch reads DCPG. GTP contacts are provided by residues 81–85 and 136–139; these read DCPGH and NKCD. The interval 136 to 139 is G4; sequence NKCD. Residues 174–176 are G5; that stretch reads SAL.

Belongs to the TRAFAC class translation factor GTPase superfamily. Classic translation factor GTPase family. EF-Tu/EF-1A subfamily. Monomer.

It is found in the cytoplasm. The enzyme catalyses GTP + H2O = GDP + phosphate + H(+). In terms of biological role, GTP hydrolase that promotes the GTP-dependent binding of aminoacyl-tRNA to the A-site of ribosomes during protein biosynthesis. The sequence is that of Elongation factor Tu from Paramagnetospirillum magneticum (strain ATCC 700264 / AMB-1) (Magnetospirillum magneticum).